The sequence spans 95 residues: uncharacterized protein (95 aa).

Residues Trp45–Phe65 form a helical membrane-spanning segment.

It is found in the membrane. This is an uncharacterized protein from Mycobacterium leprae (strain TN).